A 302-amino-acid polypeptide reads, in one-letter code: ATP synthase mitochondrial F1 complex assembly factor 1 (302 aa).

It belongs to the ATP11 family. In terms of assembly, interacts with ATP5F1B; involved in the assembly of the F1 component of the mitochondrial ATP synthase (ATPase).

It localises to the mitochondrion inner membrane. In terms of biological role, has a complex stabilizing activity in the assembly of the mitochondrial F1-F0 complex. The chain is ATP synthase mitochondrial F1 complex assembly factor 1 (atpaf1) from Danio rerio (Zebrafish).